Consider the following 280-residue polypeptide: 4-deoxy-L-threo-5-hexosulose-uronate ketol-isomerase (280 aa).

4 residues coordinate Zn(2+): H198, H200, E205, and H247.

This sequence belongs to the KduI family. The cofactor is Zn(2+).

It carries out the reaction 5-dehydro-4-deoxy-D-glucuronate = 3-deoxy-D-glycero-2,5-hexodiulosonate. Its pathway is glycan metabolism; pectin degradation; 2-dehydro-3-deoxy-D-gluconate from pectin: step 4/5. In terms of biological role, catalyzes the isomerization of 5-dehydro-4-deoxy-D-glucuronate to 3-deoxy-D-glycero-2,5-hexodiulosonate. The protein is 4-deoxy-L-threo-5-hexosulose-uronate ketol-isomerase of Bacteroides fragilis (strain YCH46).